A 302-amino-acid polypeptide reads, in one-letter code: Nucleotide-binding protein Strop_3101 (302 aa).

Position 26-33 (26-33 (GVSGGGRS)) interacts with ATP. 77-80 (DVRS) lines the GTP pocket.

The protein belongs to the RapZ-like family.

Functionally, displays ATPase and GTPase activities. In Salinispora tropica (strain ATCC BAA-916 / DSM 44818 / JCM 13857 / NBRC 105044 / CNB-440), this protein is Nucleotide-binding protein Strop_3101.